The primary structure comprises 146 residues: Holo-[acyl-carrier-protein] synthase (146 aa).

Mg(2+) contacts are provided by aspartate 9 and glutamate 63.

It belongs to the P-Pant transferase superfamily. AcpS family. Requires Mg(2+) as cofactor.

Its subcellular location is the cytoplasm. The enzyme catalyses apo-[ACP] + CoA = holo-[ACP] + adenosine 3',5'-bisphosphate + H(+). In terms of biological role, transfers the 4'-phosphopantetheine moiety from coenzyme A to a Ser of acyl-carrier-protein. This is Holo-[acyl-carrier-protein] synthase from Burkholderia multivorans (strain ATCC 17616 / 249).